The following is a 235-amino-acid chain: Sugar fermentation stimulation protein homolog (235 aa).

This sequence belongs to the SfsA family.

In Pseudomonas paraeruginosa (strain DSM 24068 / PA7) (Pseudomonas aeruginosa (strain PA7)), this protein is Sugar fermentation stimulation protein homolog.